The following is a 464-amino-acid chain: Glutamate--tRNA ligase (464 aa).

The short motif at 10–20 (PSPTGHLHLGG) is the 'HIGH' region element. Residues Cys99, Cys101, Cys126, and Glu128 each contribute to the Zn(2+) site. Positions 236 to 240 (KLSKR) match the 'KMSKS' region motif. Lys239 contributes to the ATP binding site.

This sequence belongs to the class-I aminoacyl-tRNA synthetase family. Glutamate--tRNA ligase type 1 subfamily. Monomer. The cofactor is Zn(2+).

Its subcellular location is the cytoplasm. The catalysed reaction is tRNA(Glu) + L-glutamate + ATP = L-glutamyl-tRNA(Glu) + AMP + diphosphate. Its function is as follows. Catalyzes the attachment of glutamate to tRNA(Glu) in a two-step reaction: glutamate is first activated by ATP to form Glu-AMP and then transferred to the acceptor end of tRNA(Glu). The polypeptide is Glutamate--tRNA ligase (Oleidesulfovibrio alaskensis (strain ATCC BAA-1058 / DSM 17464 / G20) (Desulfovibrio alaskensis)).